A 218-amino-acid polypeptide reads, in one-letter code: Peptide methionine sulfoxide reductase MsrA (218 aa).

The active site involves Cys57.

Belongs to the MsrA Met sulfoxide reductase family.

The catalysed reaction is L-methionyl-[protein] + [thioredoxin]-disulfide + H2O = L-methionyl-(S)-S-oxide-[protein] + [thioredoxin]-dithiol. It carries out the reaction [thioredoxin]-disulfide + L-methionine + H2O = L-methionine (S)-S-oxide + [thioredoxin]-dithiol. In terms of biological role, has an important function as a repair enzyme for proteins that have been inactivated by oxidation. Catalyzes the reversible oxidation-reduction of methionine sulfoxide in proteins to methionine. The polypeptide is Peptide methionine sulfoxide reductase MsrA (Brucella suis biovar 1 (strain 1330)).